A 244-amino-acid polypeptide reads, in one-letter code: Lytic polysaccharide monooxygenase-like protein ANIA_04702 (244 aa).

The first 23 residues, 1-23, serve as a signal peptide directing secretion; it reads MLMSTSPSPWLAAAMLCIGLANA. Residue His24 coordinates Cu(2+). Residue His24 is modified to Methylhistidine. Residues Asn57, Asn80, Asn118, Asn159, Asn192, and Asn198 are each glycosylated (N-linked (GlcNAc...) asparagine). 2 disulfides stabilise this stretch: Cys72-Cys177 and Cys142-Cys196. Asn215 is lipidated: GPI-anchor amidated asparagine. A propeptide spans 216 to 244 (removed in mature form); it reads AGLEAVTVPSFLTAVVPTFLGIAYGLLMA.

It belongs to the X325 family. Cu(2+) is required as a cofactor. The catalytically essential N-terminal histidine His-24 is post-translationally modified by methylation to prevent protonation of the histidine side chain, and protect the critical active site of the enzyme from oxidative damage.

The protein localises to the cell membrane. Functionally, lytic polysaccharide monooxygenase-like protein that has diverged to biological functions other than polysaccharide degradation since it does not perform oxidative cleavage of polysaccharides. Acts as a cell surface-bound protein that functions in the copper-accumulation pathway. May also act as the major cell wall sensor that regulates MAP kinase-dependent hyphal anastomosis, the fusion of hyphal cells. This chain is Lytic polysaccharide monooxygenase-like protein ANIA_04702, found in Emericella nidulans (strain FGSC A4 / ATCC 38163 / CBS 112.46 / NRRL 194 / M139) (Aspergillus nidulans).